Reading from the N-terminus, the 235-residue chain is Orotidine 5'-phosphate decarboxylase (235 aa).

Residues D17, K39, 66-75 (DLKLHDIGNT), T121, R182, Q191, G211, and R212 contribute to the substrate site. K68 (proton donor) is an active-site residue.

Belongs to the OMP decarboxylase family. Type 1 subfamily. As to quaternary structure, homodimer.

It catalyses the reaction orotidine 5'-phosphate + H(+) = UMP + CO2. It functions in the pathway pyrimidine metabolism; UMP biosynthesis via de novo pathway; UMP from orotate: step 2/2. Functionally, catalyzes the decarboxylation of orotidine 5'-monophosphate (OMP) to uridine 5'-monophosphate (UMP). This Afipia carboxidovorans (strain ATCC 49405 / DSM 1227 / KCTC 32145 / OM5) (Oligotropha carboxidovorans) protein is Orotidine 5'-phosphate decarboxylase.